The sequence spans 230 residues: Large ribosomal subunit protein uL1 (230 aa).

The protein belongs to the universal ribosomal protein uL1 family. In terms of assembly, part of the 50S ribosomal subunit.

Functionally, binds directly to 23S rRNA. The L1 stalk is quite mobile in the ribosome, and is involved in E site tRNA release. Its function is as follows. Protein L1 is also a translational repressor protein, it controls the translation of the L11 operon by binding to its mRNA. The protein is Large ribosomal subunit protein uL1 of Bacillus cereus (strain G9842).